The chain runs to 370 residues: Putative glutamate--cysteine ligase 2 (370 aa).

The protein belongs to the glutamate--cysteine ligase type 2 family. YbdK subfamily.

The catalysed reaction is L-cysteine + L-glutamate + ATP = gamma-L-glutamyl-L-cysteine + ADP + phosphate + H(+). Its function is as follows. ATP-dependent carboxylate-amine ligase which exhibits weak glutamate--cysteine ligase activity. This Herminiimonas arsenicoxydans protein is Putative glutamate--cysteine ligase 2.